Here is a 327-residue protein sequence, read N- to C-terminus: MSGERAKRFPLALEDLKREPRKPEGRAAERQAAGDAARQRLIAAAAAAPAAASPIAPERLAPRAAGASGSGVPVAKPARAKPPTTPGVAKSAPSSGVKNGDKSATPNVALSGALALTSERVRERMVERLRANGVADPRVLAAMSAVPRHMFVDPGLAAQAYEDAALPIGHQQTISKPSVVARMIELAAAGRTLERVLEIGTGCGYQAAVLSRVARDVYSIERVKPLYERAKLNLRPLRVPNIRLHYGDGRVGLPAAAPFDAIVIAAAGLDVPRALLEQLAIGGRLVAPVGEQAGEQVLTLVERVAPAQWRESRLDRVFFVPLKSGVI.

2 disordered regions span residues 1 to 38 (MSGE…DAAR) and 62 to 105 (PRAA…KSAT). A compositionally biased stretch (basic and acidic residues) spans 14-29 (EDLKREPRKPEGRAAE). A compositionally biased stretch (low complexity) spans 62–77 (PRAAGASGSGVPVAKP). Residues 92-105 (APSSGVKNGDKSAT) are compositionally biased toward polar residues. Ser-175 is an active-site residue.

Belongs to the methyltransferase superfamily. L-isoaspartyl/D-aspartyl protein methyltransferase family.

The protein localises to the cytoplasm. It catalyses the reaction [protein]-L-isoaspartate + S-adenosyl-L-methionine = [protein]-L-isoaspartate alpha-methyl ester + S-adenosyl-L-homocysteine. In terms of biological role, catalyzes the methyl esterification of L-isoaspartyl residues in peptides and proteins that result from spontaneous decomposition of normal L-aspartyl and L-asparaginyl residues. It plays a role in the repair and/or degradation of damaged proteins. The chain is Protein-L-isoaspartate O-methyltransferase from Burkholderia thailandensis (strain ATCC 700388 / DSM 13276 / CCUG 48851 / CIP 106301 / E264).